The following is a 316-amino-acid chain: Acetyl-coenzyme A carboxylase carboxyl transferase subunit alpha (316 aa).

The region spanning Arg39 to Met293 is the CoA carboxyltransferase C-terminal domain.

Belongs to the AccA family. Acetyl-CoA carboxylase is a heterohexamer composed of biotin carboxyl carrier protein (AccB), biotin carboxylase (AccC) and two subunits each of ACCase subunit alpha (AccA) and ACCase subunit beta (AccD).

The protein resides in the cytoplasm. The enzyme catalyses N(6)-carboxybiotinyl-L-lysyl-[protein] + acetyl-CoA = N(6)-biotinyl-L-lysyl-[protein] + malonyl-CoA. Its pathway is lipid metabolism; malonyl-CoA biosynthesis; malonyl-CoA from acetyl-CoA: step 1/1. Functionally, component of the acetyl coenzyme A carboxylase (ACC) complex. First, biotin carboxylase catalyzes the carboxylation of biotin on its carrier protein (BCCP) and then the CO(2) group is transferred by the carboxyltransferase to acetyl-CoA to form malonyl-CoA. This chain is Acetyl-coenzyme A carboxylase carboxyl transferase subunit alpha, found in Pseudomonas aeruginosa (strain UCBPP-PA14).